Here is an 861-residue protein sequence, read N- to C-terminus: Probable beta-glucosidase A (861 aa).

A signal peptide spans 1–19 (MKLSILEAAALTAASVVSA). 3 N-linked (GlcNAc...) asparagine glycosylation sites follow: Asn-62, Asn-212, and Asn-253. Asp-281 is an active-site residue. Asn-316, Asn-323, Asn-355, Asn-524, Asn-543, Asn-565, Asn-669, and Asn-713 each carry an N-linked (GlcNAc...) asparagine glycan. A disordered region spans residues 735-754 (PEGATDGSPQPRLPASGGPG).

It belongs to the glycosyl hydrolase 3 family.

The protein localises to the secreted. The catalysed reaction is Hydrolysis of terminal, non-reducing beta-D-glucosyl residues with release of beta-D-glucose.. Its pathway is glycan metabolism; cellulose degradation. Functionally, beta-glucosidases are one of a number of cellulolytic enzymes involved in the degradation of cellulosic biomass. Catalyzes the last step releasing glucose from the inhibitory cellobiose. The protein is Probable beta-glucosidase A (bglA) of Aspergillus terreus (strain NIH 2624 / FGSC A1156).